The sequence spans 241 residues: MALCCFAFSAPCLHLRSRRSCSSCFLLATSAAFFSARLLRRAFSSSFLFKYSAVCFSSSFSRSFFRFLFSSARRCRSRCVSPRGGAFSPGGPRRSRPRLSSSKDSKPSSTASSSSLSFNSSSKDNSPSTNSSTSRSSGHDTGKHRNSPADTKLTMLIISPLPRVWTESSFRIPSLRVWRLCTRRLVPHLWGTMFGPPTSSRPTGHLSRASDHLGPHRWTRYRLSSTVPYPSTPLLPHPENL.

Short sequence motifs (nuclear localization signal) lie at residues 73–78 (RRCRSR) and 91–98 (GPRRSRPR). Low complexity-rich tracts occupy residues 79–100 (CVSP…PRLS) and 107–136 (PSST…TSRS). The interval 79–151 (CVSPRGGAFS…GKHRNSPADT (73 aa)) is disordered. The short motif at 175–184 (LRVWRLCTRR) is the Mitochondrial targeting signal element.

This sequence belongs to the HTLV-1 accessory protein p30II family. In terms of assembly, p30II binds to the KIX domains of CREBBP and EP300.

It is found in the host nucleus. The protein localises to the host nucleolus. The protein resides in the host mitochondrion inner membrane. P30II is a multifunctional regulator that sequesters EP300/CREBBP and down-regulates CREB-responsive element (CRE) and Tax-responsive element (TRE) mediated transcription. Specifically binds and represses tax/rex mRNA nuclear export. Since Tax and Rex are positive regulators of viral gene expression, their inhibition by p30II reduces virion production, and allows the virus to escape the host immune surveillance and persist latently in an immune-competent host. Functionally, p13II increases mitochondrial permeability to monovalent cations, producing a rapid, membrane potential-dependent influx of potassium. This could involve a channel-forming activity. Interferes with cell proliferation and transformation and promotes apoptosis induced by ceramide and Fas ligand, probably using the Ras signaling. This is Accessory protein p30II from Human T-cell leukemia virus 1 (strain Japan ATK-1 subtype A) (HTLV-1).